Reading from the N-terminus, the 569-residue chain is MSNKNKSYDYVIIGGGSAGSVLGNRLSEDKDKEVLVLEAGRSDYFWDLFIQMPAALMFPSGNKFYDWIYSTDEEPHMGGRKVAHARGKVLGGSSSINGMIYQRGNPMDYEGWAEPEGMETWDFAHCLPYFKKLEKTYGAAPYDKFRGHDGPIKLKRGPATNPLFQSFFDAGVEAGYHKTPDVNGFRQEGFGPFDSQVHRGRRMSASRAYLHPAMKRKNLTVETRAFVTEIHYEGRRATGVTYKKNGKLHTIDAKEVILSGGAFNTPQLLQLSGIGDSEFLKSKGIEPRVHLPGVGENFEDHLEVYIQHKCKEPVSLQPSLDIKRMPFIGLQWIFTRTGAAASNHFEGGGFVRSNNEVDYPNLMFHFLPIAVRYDGQKAAVAHGYQVHVGPMYSNSRGSLKIKSKDPFEKPSIRFNYLSTEEDKKEWVEAIRVARNILSQKAMDPFNGGEISPGPEVQTDEEILDWVRRDGETALHPSCSAKMGPASDPMAVVDPLTMKVHGMENLRVVDASAMPRTTNGNIHAPVLMLAEKAADIIRGRKPLEPQYIDYYKHGVHDENEGAIEVKPYAK.

Position 9–38 (9–38 (DYVIIGGGSAGSVLGNRLSEDKDKEVLVLE)) interacts with FAD. H475 (proton acceptor) is an active-site residue.

This sequence belongs to the GMC oxidoreductase family. Requires FAD as cofactor.

The catalysed reaction is choline + A = betaine aldehyde + AH2. It catalyses the reaction betaine aldehyde + NAD(+) + H2O = glycine betaine + NADH + 2 H(+). It functions in the pathway amine and polyamine biosynthesis; betaine biosynthesis via choline pathway; betaine aldehyde from choline (cytochrome c reductase route): step 1/1. Functionally, involved in the biosynthesis of the osmoprotectant glycine betaine. Catalyzes the oxidation of choline to betaine aldehyde and betaine aldehyde to glycine betaine at the same rate. The protein is Oxygen-dependent choline dehydrogenase of Staphylococcus aureus (strain MSSA476).